A 562-amino-acid polypeptide reads, in one-letter code: Nicotinate phosphoribosyltransferase (562 aa).

Nicotinate contacts are provided by Tyr36, Phe183, and Thr225. Phosphohistidine is present on His228. Thr397 is a binding site for 5-phospho-alpha-D-ribose 1-diphosphate.

The protein belongs to the NAPRTase family. Requires Mg(2+) as cofactor. Mn(2+) serves as cofactor. Transiently phosphorylated on a His residue during the reaction cycle. Phosphorylation strongly increases the affinity for substrates and increases the rate of nicotinate D-ribonucleotide production. Dephosphorylation regenerates the low-affinity form of the enzyme, leading to product release.

The catalysed reaction is nicotinate + 5-phospho-alpha-D-ribose 1-diphosphate + ATP + H2O = nicotinate beta-D-ribonucleotide + ADP + phosphate + diphosphate. The protein operates within cofactor biosynthesis; NAD(+) biosynthesis; nicotinate D-ribonucleotide from nicotinate: step 1/1. Its function is as follows. Catalyzes the first step in the biosynthesis of NAD from nicotinic acid, the ATP-dependent synthesis of beta-nicotinate D-ribonucleotide from nicotinate and 5-phospho-D-ribose 1-phosphate. Helps prevent cellular oxidative stress via its role in NAD biosynthesis. The polypeptide is Nicotinate phosphoribosyltransferase (Caenorhabditis elegans).